The chain runs to 923 residues: Probable ribosylation factor GTPase-activating protein cnt6 (923 aa).

Residue Ser-207 is modified to Phosphoserine. A compositionally biased stretch (basic and acidic residues) spans Thr-444–Arg-455. The interval Thr-444–Ile-476 is disordered. Positions Lys-526–Lys-632 constitute a PH domain. Residues Asn-714–Ala-837 form the Arf-GAP domain. The C4-type zinc-finger motif lies at Cys-730–Cys-754.

The protein localises to the cytoplasm. It localises to the cell tip. Functionally, GTPase-activating protein for the ADP ribosylation factor family. This Schizosaccharomyces pombe (strain 972 / ATCC 24843) (Fission yeast) protein is Probable ribosylation factor GTPase-activating protein cnt6 (cnt6).